We begin with the raw amino-acid sequence, 107 residues long: Large ribosomal subunit protein P2 (107 aa).

Residues 63 to 83 (SSVPSGGSAPAAAAPSGGAAP) are compositionally biased toward low complexity. A disordered region spans residues 63 to 107 (SSVPSGGSAPAAAAPSGGAAPKAEEKKKEEPKEESDDDMGFGLFD). The segment covering 84-93 (KAEEKKKEEP) has biased composition (basic and acidic residues).

This sequence belongs to the eukaryotic ribosomal protein P1/P2 family. As to quaternary structure, P1 and P2 exist as dimers at the large ribosomal subunit. In terms of processing, phosphorylated.

Functionally, plays an important role in the elongation step of protein synthesis. The chain is Large ribosomal subunit protein P2 from Caenorhabditis elegans.